The chain runs to 256 residues: DNA repair protein RecO (256 aa).

This sequence belongs to the RecO family.

Its function is as follows. Involved in DNA repair and RecF pathway recombination. The chain is DNA repair protein RecO from Pelotomaculum thermopropionicum (strain DSM 13744 / JCM 10971 / SI).